The chain runs to 188 residues: Large ribosomal subunit protein eL18 (188 aa).

Positions H151 to K188 are disordered. Basic residues-rich tracts occupy residues S161 to G171 and R178 to K188.

It belongs to the eukaryotic ribosomal protein eL18 family.

Its subcellular location is the cytoplasm. In Lysiphlebus testaceipes (Greenbugs aphid parastoid), this protein is Large ribosomal subunit protein eL18 (RpL18).